The primary structure comprises 151 residues: Phosphopantetheine adenylyltransferase (151 aa).

Ser-9 lines the substrate pocket. ATP contacts are provided by residues 9-10 (SF) and His-17. Positions 41, 73, and 87 each coordinate substrate. Residues 88 to 90 (GLR), Glu-98, and 122 to 128 (TSFISSS) each bind ATP.

This sequence belongs to the bacterial CoaD family. As to quaternary structure, homohexamer. Requires Mg(2+) as cofactor.

Its subcellular location is the cytoplasm. It carries out the reaction (R)-4'-phosphopantetheine + ATP + H(+) = 3'-dephospho-CoA + diphosphate. The protein operates within cofactor biosynthesis; coenzyme A biosynthesis; CoA from (R)-pantothenate: step 4/5. Its function is as follows. Reversibly transfers an adenylyl group from ATP to 4'-phosphopantetheine, yielding dephospho-CoA (dPCoA) and pyrophosphate. The sequence is that of Phosphopantetheine adenylyltransferase from Flavobacterium psychrophilum (strain ATCC 49511 / DSM 21280 / CIP 103535 / JIP02/86).